A 325-amino-acid polypeptide reads, in one-letter code: Melanocortin receptor 5 (325 aa).

The Extracellular portion of the chain corresponds to 1-37 (MNSSFHLHFLDLGLNATEGNLSGLSVRNASSPCEDMG). N-linked (GlcNAc...) asparagine glycans are attached at residues N2, N15, N20, and N28. The chain crosses the membrane as a helical span at residues 38 to 61 (IAVEVFLALGLISLLENILVIGAI). Residues 62-73 (VRNRNLHIPMYF) are Cytoplasmic-facing. The chain crosses the membrane as a helical span at residues 74 to 97 (FVGSLAVADMLVSLSNFWETITIY). Residues 98-114 (LLTNKHLVMADASVRHL) lie on the Extracellular side of the membrane. Residues 115–138 (DNVFDSMICISVVASMCSLLAIAV) traverse the membrane as a helical segment. Topologically, residues 139-155 (DRYVTIFCRLRYQRIMT) are cytoplasmic. A helical membrane pass occupies residues 156 to 179 (GRRSGAIIAGIWAFCTSCGTVFIV). At 180 to 186 (YYESTYV) the chain is on the extracellular side. The helical transmembrane segment at 187-211 (VVCLIAMFLTMLLLMASLYTHMFLL) threads the bilayer. At 212–239 (ARTHVRRIAALPGHSSVRQRTGVKGAIT) the chain is on the cytoplasmic side. Residues 240-265 (LAMLLGVFIICWAPFFLHLILMISCP) traverse the membrane as a helical segment. The Extracellular segment spans residues 266 to 273 (QNLYCSCF). The chain crosses the membrane as a helical span at residues 274–297 (MSHFNMYLILIMCNSVIDPLIYAF). Over 298 to 325 (RSQEMRKTFKEIVCFQGFRTPCRFPSTY) the chain is Cytoplasmic. C311 carries the S-palmitoyl cysteine lipid modification.

It belongs to the G-protein coupled receptor 1 family.

The protein localises to the cell membrane. Receptor for MSH (alpha, beta and gamma) and ACTH. The activity of this receptor is mediated by G proteins which activate adenylate cyclase. This receptor is a possible mediator of the immunomodulation properties of melanocortins. In Ovis aries (Sheep), this protein is Melanocortin receptor 5 (MC5R).